A 559-amino-acid chain; its full sequence is MADGDYFAEAARAVGCPHAPVPGLGLGPPLGWKERLKAGLANSGSTLWFLAGLGLLYALRVPLRLCDNVTAVTGFLSSLTPKFYVALTGTSSLISGLIFIFEWWYFHKHGTSFIEQVSISHLRPLMGGTESSISEPGSPANSRESETLRHHHLSECKVWRNPLNLFRGAEYRRYTWVTGKEPLTYYDMNLSAQDHQTFFTCETDFLRPSDTVMQKAWRERNPPARIKAAYQALELNNDCATAYVLLAEEEATTIVDAERLFKQALRAGEIIYRRSQQCQHQSPQHEAQLRRDTNVLVYIKRRLAMCARKLGRIREAVKIMRDLMKEFPPLTMLNIHENLLESLLELQAYADVQAVLAKYDDISLPKSAAICYTAALLKTRTVSDKFSPETAFRKGLSTAEINAVEAIHRAVEFNPHVPKYLLEMKSLILPPEHILKRGDSEAIAYAFFHLQHWKRIEGALNLLQCTWEGTFRMIPYPLEKGHLFYPYPSCTETADRELLPTFHHVSVYPKKELPFFIHFTAGLCSSTAMIALLTHQFPEVMGVFAKAVSMISRTCVEYL.

Helical transmembrane passes span 39-59 (GLAN…LYAL), 83-103 (FYVA…IFEW), and 513-533 (LPFF…IALL).

It belongs to the ST7 family.

Its subcellular location is the membrane. This Rattus norvegicus (Rat) protein is Suppressor of tumorigenicity 7 protein-like (St7l).